The chain runs to 365 residues: Alanine racemase (365 aa).

The Proton acceptor; specific for D-alanine role is filled by lysine 32. Lysine 32 carries the N6-(pyridoxal phosphate)lysine modification. A substrate-binding site is contributed by arginine 128. Tyrosine 257 acts as the Proton acceptor; specific for L-alanine in catalysis. Residue methionine 305 participates in substrate binding.

Belongs to the alanine racemase family. It depends on pyridoxal 5'-phosphate as a cofactor.

The enzyme catalyses L-alanine = D-alanine. Its pathway is amino-acid biosynthesis; D-alanine biosynthesis; D-alanine from L-alanine: step 1/1. In terms of biological role, catalyzes the interconversion of L-alanine and D-alanine. May also act on other amino acids. In Francisella philomiragia subsp. philomiragia (strain ATCC 25017 / CCUG 19701 / FSC 153 / O#319-036), this protein is Alanine racemase (alr).